The sequence spans 548 residues: Uridine-cytidine kinase-like 1 (548 aa).

Over residues 1–18 the composition is skewed to low complexity; it reads MAAPPASMSAAPSPLQSA. The tract at residues 1-74 is disordered; sequence MAAPPASMSA…CKSEPPLLRT (74 aa). A phosphoserine mark is found at serine 56 and serine 63. An ATP-binding site is contributed by 105-112; the sequence is GGSASGKT. Serine 539 is subject to Phosphoserine.

This sequence belongs to the uridine kinase family. As to quaternary structure, interacts with RNF19B. In terms of processing, ubiquitinated by RNF19B; which induces proteasomal degradation.

The protein localises to the cytoplasm. It localises to the nucleus. The catalysed reaction is uridine + ATP = UMP + ADP + H(+). It catalyses the reaction cytidine + ATP = CMP + ADP + H(+). It functions in the pathway pyrimidine metabolism; UMP biosynthesis via salvage pathway; UMP from uridine: step 1/1. Its function is as follows. May contribute to UTP accumulation needed for blast transformation and proliferation. The polypeptide is Uridine-cytidine kinase-like 1 (Uckl1) (Mus musculus (Mouse)).